A 167-amino-acid chain; its full sequence is S-ribosylhomocysteine lyase (167 aa).

Residues His-54, His-58, and Cys-128 each coordinate Fe cation.

The protein belongs to the LuxS family. In terms of assembly, homodimer. Requires Fe cation as cofactor.

The enzyme catalyses S-(5-deoxy-D-ribos-5-yl)-L-homocysteine = (S)-4,5-dihydroxypentane-2,3-dione + L-homocysteine. Involved in the synthesis of autoinducer 2 (AI-2) which is secreted by bacteria and is used to communicate both the cell density and the metabolic potential of the environment. The regulation of gene expression in response to changes in cell density is called quorum sensing. Catalyzes the transformation of S-ribosylhomocysteine (RHC) to homocysteine (HC) and 4,5-dihydroxy-2,3-pentadione (DPD). The protein is S-ribosylhomocysteine lyase of Sulfurimonas denitrificans (strain ATCC 33889 / DSM 1251) (Thiomicrospira denitrificans (strain ATCC 33889 / DSM 1251)).